Reading from the N-terminus, the 107-residue chain is MDPFAGTGQSKSYRTFGNVFQRLSMSGNPKPLAKKPLLLPEASKAIEFWNYRDVIGGEEAEQERNERASRIAISRIASSRSSIPEYRQAIMQHLTKHVQQLDQLAEW.

The APC/C is composed of at least 13 subunits: apc1, apc2, nuc2, apc4, apc5, cut9, apc8, apc10, apc11, hcn1, apc13, apc14 and apc15.

It localises to the ascus epiplasm. Functionally, component of the anaphase promoting complex/cyclosome (APC/C), a cell cycle-regulated E3 ubiquitin-protein ligase complex that controls progression through mitosis and the G1 phase of the cell cycle. The APC/C is thought to confer substrate specificity and, in the presence of ubiquitin-conjugating E2 enzymes, it catalyzes the formation of protein-ubiquitin conjugates that are subsequently degraded by the 26S proteasome. Appears to play a role in spore wall formation. In Schizosaccharomyces pombe (strain 972 / ATCC 24843) (Fission yeast), this protein is Anaphase-promoting complex subunit 14.